A 214-amino-acid chain; its full sequence is A-type ATP synthase subunit D (214 aa).

It belongs to the V-ATPase D subunit family. Has multiple subunits with at least A(3), B(3), C, D, E, F, H, I and proteolipid K(x).

The protein localises to the cell membrane. In terms of biological role, component of the A-type ATP synthase that produces ATP from ADP in the presence of a proton gradient across the membrane. The polypeptide is A-type ATP synthase subunit D (Pyrococcus furiosus (strain ATCC 43587 / DSM 3638 / JCM 8422 / Vc1)).